Reading from the N-terminus, the 406-residue chain is Elongation factor Tu-A (406 aa).

One can recognise a tr-type G domain in the interval 10–215; sequence KPHVNVGTIG…AIDEYIPTPV (206 aa). Residues 19-26 are G1; that stretch reads GHVDHGKT. Residue 19–26 coordinates GTP; sequence GHVDHGKT. Thr26 is a Mg(2+) binding site. The segment at 61–65 is G2; it reads GITIN. A G3 region spans residues 82–85; the sequence is DCPG. GTP contacts are provided by residues 82 to 86 and 137 to 140; these read DCPGH and NKVD. Residues 137-140 form a G4 region; sequence NKVD. Residues 175–177 form a G5 region; it reads SAL. Thr395 is modified (phosphothreonine).

The protein belongs to the TRAFAC class translation factor GTPase superfamily. Classic translation factor GTPase family. EF-Tu/EF-1A subfamily. In terms of assembly, monomer. Binds to the 70S ribosome, contacts tmRNA during trans-translation. Phosphorylated on a threonine.

Its subcellular location is the cytoplasm. It catalyses the reaction GTP + H2O = GDP + phosphate + H(+). GTP hydrolase that promotes the GTP-dependent binding of aminoacyl-tRNA to the A-site of ribosomes during protein biosynthesis. Functionally, EF-Tu-GDP binds to the acceptor arm of tmRNA by interacting with its acceptor arm, suggesting that GTP hydrolysis by EF-Tu is essential for tmRNA function. Its function is as follows. Protects glycyl-tRNA(Gly) from hydrolysis by E.coli D-aminoacyl-tRNA deacylase (dtd). This chain is Elongation factor Tu-A, found in Thermus thermophilus (strain ATCC 27634 / DSM 579 / HB8).